We begin with the raw amino-acid sequence, 191 residues long: MFCMDLYKLFLEKKALLEGHFKLSSGLHSNKYFQCALLTAEPEIAEMLCETLAQKLRADKIEANLVIGPAIGGIILAYEMARALKVKAFFAEREEGQMRLRRGFTVKPDDKVIVVEDVVTTGGSTREVMDLVQSMGGEVVAVASLVDRSGGKVDFGVPFYPLLKVNVETYLPENCPLCAEGVPVVKPGSRK.

Residue 116–124 (EDVVTTGGS) coordinates 5-phospho-alpha-D-ribose 1-diphosphate. Thr120 and Arg148 together coordinate orotate.

It belongs to the purine/pyrimidine phosphoribosyltransferase family. PyrE subfamily. In terms of assembly, homodimer. Requires Mg(2+) as cofactor.

It carries out the reaction orotidine 5'-phosphate + diphosphate = orotate + 5-phospho-alpha-D-ribose 1-diphosphate. The protein operates within pyrimidine metabolism; UMP biosynthesis via de novo pathway; UMP from orotate: step 1/2. In terms of biological role, catalyzes the transfer of a ribosyl phosphate group from 5-phosphoribose 1-diphosphate to orotate, leading to the formation of orotidine monophosphate (OMP). This Carboxydothermus hydrogenoformans (strain ATCC BAA-161 / DSM 6008 / Z-2901) protein is Orotate phosphoribosyltransferase.